A 243-amino-acid chain; its full sequence is Ubiquinone/menaquinone biosynthesis C-methyltransferase UbiE (243 aa).

Residues T69, D90, and 116-117 each bind S-adenosyl-L-methionine; that span reads DA.

This sequence belongs to the class I-like SAM-binding methyltransferase superfamily. MenG/UbiE family.

The enzyme catalyses a 2-demethylmenaquinol + S-adenosyl-L-methionine = a menaquinol + S-adenosyl-L-homocysteine + H(+). The catalysed reaction is a 2-methoxy-6-(all-trans-polyprenyl)benzene-1,4-diol + S-adenosyl-L-methionine = a 5-methoxy-2-methyl-3-(all-trans-polyprenyl)benzene-1,4-diol + S-adenosyl-L-homocysteine + H(+). It functions in the pathway quinol/quinone metabolism; menaquinone biosynthesis; menaquinol from 1,4-dihydroxy-2-naphthoate: step 2/2. Its pathway is cofactor biosynthesis; ubiquinone biosynthesis. In terms of biological role, methyltransferase required for the conversion of demethylmenaquinol (DMKH2) to menaquinol (MKH2) and the conversion of 2-polyprenyl-6-methoxy-1,4-benzoquinol (DDMQH2) to 2-polyprenyl-3-methyl-6-methoxy-1,4-benzoquinol (DMQH2). The sequence is that of Ubiquinone/menaquinone biosynthesis C-methyltransferase UbiE from Ralstonia nicotianae (strain ATCC BAA-1114 / GMI1000) (Ralstonia solanacearum).